The primary structure comprises 77 residues: Conotoxin Cl6.15 (77 aa).

An N-terminal signal peptide occupies residues 1–19 (MKLSVKFLLFLMILPLIAG). A propeptide spanning residues 20–37 (EDMSDNDAPKSVDVQRNV) is cleaved from the precursor. Disulfide bonds link Cys49–Cys61, Cys55–Cys66, and Cys60–Cys75.

The protein belongs to the conotoxin I1 superfamily. As to expression, expressed by the venom duct.

The protein localises to the secreted. The protein is Conotoxin Cl6.15 of Californiconus californicus (California cone).